The primary structure comprises 1450 residues: DNA-directed RNA polymerase III subunit rpc1 (1450 aa).

The Zn(2+) site is built by Cys-67, Cys-70, Cys-77, His-80, Cys-107, Cys-110, and Cys-154. The Mg(2+) site is built by Asp-491, Asp-493, and Asp-495. A bridging helix region spans residues 832-844; the sequence is PTEFFFHTMGGRE.

The protein belongs to the RNA polymerase beta' chain family. As to quaternary structure, component of the RNA polymerase III (Pol III) complex consisting of 17 subunits.

It localises to the nucleus. It catalyses the reaction RNA(n) + a ribonucleoside 5'-triphosphate = RNA(n+1) + diphosphate. Functionally, DNA-dependent RNA polymerase catalyzes the transcription of DNA into RNA using the four ribonucleoside triphosphates as substrates. Largest and catalytic core component of RNA polymerase III which synthesizes small RNAs, such as 5S rRNA and tRNAs. Forms the polymerase active center together with the second largest subunit. A single-stranded DNA template strand of the promoter is positioned within the central active site cleft of Pol III. A bridging helix emanates from RPC1 and crosses the cleft near the catalytic site and is thought to promote translocation of Pol III by acting as a ratchet that moves the RNA-DNA hybrid through the active site by switching from straight to bent conformations at each step of nucleotide addition. This is DNA-directed RNA polymerase III subunit rpc1 (polr3a) from Dictyostelium discoideum (Social amoeba).